The sequence spans 273 residues: Karrikin insensitive 2 receptor B (273 aa).

The active-site Nucleophile is the S95. D217 is an active-site residue.

This sequence belongs to the AB hydrolase superfamily. As to expression, expressed in stigma.

The protein resides in the nucleus. The protein localises to the cytoplasm. Functionally, may be involved in plant olfaction during volatile communication. The protein is Karrikin insensitive 2 receptor B of Petunia hybrida (Petunia).